Consider the following 367-residue polypeptide: Cobalt-precorrin-5B C(1)-methyltransferase (367 aa).

It belongs to the CbiD family.

It carries out the reaction Co-precorrin-5B + S-adenosyl-L-methionine = Co-precorrin-6A + S-adenosyl-L-homocysteine. Its pathway is cofactor biosynthesis; adenosylcobalamin biosynthesis; cob(II)yrinate a,c-diamide from sirohydrochlorin (anaerobic route): step 6/10. Catalyzes the methylation of C-1 in cobalt-precorrin-5B to form cobalt-precorrin-6A. This Leptospira interrogans serogroup Icterohaemorrhagiae serovar Lai (strain 56601) protein is Cobalt-precorrin-5B C(1)-methyltransferase.